The sequence spans 148 residues: Transcriptional regulator MraZ (148 aa).

2 consecutive SpoVT-AbrB domains span residues 5-51 (VATV…PLPE) and 80-123 (AHDI…NEAR).

It belongs to the MraZ family. Forms oligomers.

It localises to the cytoplasm. Its subcellular location is the nucleoid. The protein is Transcriptional regulator MraZ of Thiobacillus denitrificans (strain ATCC 25259 / T1).